The following is a 1905-amino-acid chain: Transport and Golgi organization protein 1 homolog (1905 aa).

A signal peptide spans 1–22 (MAAAQGLLFWLLLLGPPCRVPG). Topologically, residues 23 to 1141 (QPEQDPGRRF…EPASVTPLEN (1119 aa)) are lumenal. The 63-residue stretch at 45-107 (MLMYRGEALE…PKDLIQVVHE (63 aa)) folds into the SH3 domain. A compositionally biased stretch (basic and acidic residues) spans 154 to 167 (SEKVKEKTAQRVEE). Disordered regions lie at residues 154 to 259 (SEKV…HEQE) and 313 to 621 (TVGK…IKDR). Asn173 carries an N-linked (GlcNAc...) asparagine glycan. Acidic residues predominate over residues 173–190 (NESDAEPEPGEPNSEESE). Residues 198–208 (AELRERSEAQK) are compositionally biased toward basic and acidic residues. Residues 209 to 220 (SHPQVNSQTGHA) show a composition bias toward polar residues. Phosphoserine occurs at positions 226 and 229. Positions 234–245 (LQDKLKVPDSEN) are enriched in basic and acidic residues. Asn246 carries an N-linked (GlcNAc...) asparagine glycan. The span at 246–255 (NKTSNSSQVS) shows a compositional bias: polar residues. Positions 317–327 (EEEENKEDFDE) are enriched in acidic residues. Basic and acidic residues-rich tracts occupy residues 337-366 (EDTK…KVEE) and 373-386 (KKGD…REDT). Positions 392-414 (MEGEENTDTDLESSDSKEEDDPL) are enriched in acidic residues. Composition is skewed to basic and acidic residues over residues 419-436 (RLGK…KAAD) and 459-480 (HMKD…HEVG). The stretch at 467-527 (VEEPRRDWVQ…ANQENDLKGA (61 aa)) forms a coiled coil. Polar residues predominate over residues 488–500 (DQAVQGSSQSGHL). Residues 531–542 (ISKEMLHEEKPS) are compositionally biased toward basic and acidic residues. Asn627 carries an N-linked (GlcNAc...) asparagine glycan. Disordered stretches follow at residues 657–908 (QQGG…PHAP), 1036–1059 (APPA…QPPL), and 1085–1118 (PVTR…TPVD). The segment covering 669-714 (VSEKRELPEEEVTRVTKDASDEGQEVRKTGQTDSIEGRGFRPKEPN) has biased composition (basic and acidic residues). Positions 715-730 (PEDEDYSPEELLEDEN) are enriched in acidic residues. Basic and acidic residues-rich tracts occupy residues 736 to 751 (QSKE…RLDV), 766 to 789 (TDPE…KNET), 842 to 859 (SQKK…EGHP), and 868 to 884 (PGVE…EKFV). Position 873 is a phosphoserine (Ser873). An intramembrane segment occupies 1142–1162 (AIAFIYSLVFHLTKTLLATLP). Residues 1163–1173 (DDVQPGPDFYG) lie on the Lumenal side of the membrane. Residues 1174-1194 (LPWKPVLITASLGIVSFAVFF) form a helical membrane-spanning segment. Residues 1195–1905 (WRTVLAVKSR…DCSPALKQSP (711 aa)) are Cytoplasmic-facing. The segment at 1208–1647 (VTEQQISEKL…VIVKPMPGRP (440 aa)) is mediates interaction with MIA2. A coiled-coil region spans residues 1211-1393 (QQISEKLKNI…SQKDLEVALT (183 aa)). Residues 1416-1443 (SESEDQNKGGSESDELANGEVGGDRSEK) are disordered. At Ser1428 the chain carries Phosphoserine. The stretch at 1484–1636 (NLEDQIKKLE…TQKMAMMQEE (153 aa)) forms a coiled coil. The disordered stretch occupies residues 1639–1905 (IVKPMPGRPN…DCSPALKQSP (267 aa)). Polar residues predominate over residues 1647-1664 (PNTQNPPRRGPLSQNGSF). Phosphoserine is present on residues Ser1663, Ser1675, Ser1703, Ser1724, Ser1738, and Ser1742. The tract at residues 1748–1905 (DEGKVSMAAK…DCSPALKQSP (158 aa)) is proline-rich domain (PRD); mediates interaction with the COPII coat subunits SEC23A and SEC23B. Residues 1776–1806 (LLPPIRYGPPPQLCGPFGPRPLPPPFGPGMR) show a composition bias toward pro residues. Residue Arg1781 is modified to Asymmetric dimethylarginine. The tract at residues 1785-1845 (PPQLCGPFGP…GHAPFRPLGS (61 aa)) is SEC16A-interacting region (SIR); required for its localization to endoplasmic reticulum exit sites and for its interaction with SEC16A. Residues 1821 to 1831 (GKRDLPLDPRE) show a composition bias toward basic and acidic residues. Residues Ser1890 and Ser1904 each carry the phosphoserine modification. Residues 1891 to 1905 (QGASQDCSPALKQSP) are compositionally biased toward polar residues.

Belongs to the MIA/OTOR family. Tango1 subfamily. Interacts with MIA2. Interacts (via SH3 domain) with COL7A1. Interacts with the COPII coat subunits SEC23A, SEC23B and maybe SEC24C. May interact with APOB and MIA2. Interacts with SEC16A.

Its subcellular location is the endoplasmic reticulum membrane. Functionally, plays a role in the transport of cargos that are too large to fit into COPII-coated vesicles and require specific mechanisms to be incorporated into membrane-bound carriers and exported from the endoplasmic reticulum. This protein is required for collagen VII (COL7A1) secretion by loading COL7A1 into transport carriers. It may participate in cargo loading of COL7A1 at endoplasmic reticulum exit sites by binding to COPII coat subunits Sec23/24 and guiding SH3-bound COL7A1 into a growing carrier. Does not play a role in global protein secretion and is apparently specific to COL7A1 cargo loading. However, it may participate in secretion of other proteins in cells that do not secrete COL7A1. It is also specifically required for the secretion of lipoproteins by participating in their export from the endoplasmic reticulum. Required for correct assembly of COPII coat components at endoplasmic reticulum exit sites (ERES) and for the localization of SEC16A and membrane-bound ER-resident complexes consisting of MIA2 and PREB/SEC12 to ERES. This is Transport and Golgi organization protein 1 homolog from Bos taurus (Bovine).